The primary structure comprises 493 residues: Cholesteryl ester transfer protein (493 aa).

The first 17 residues, 1-17, serve as a signal peptide directing secretion; the sequence is MLAATVLTLALLGNVHA. N-linked (GlcNAc...) asparagine glycans are attached at residues asparagine 59 and asparagine 105. Cysteine 160 and cysteine 201 form a disulfide bridge. N-linked (GlcNAc...) asparagine glycosylation is found at asparagine 257, asparagine 358, and asparagine 413.

It belongs to the BPI/LBP/Plunc superfamily. BPI/LBP family. Probably primarily expressed in liver and adipose tissues. Detected in adrenal gland, mesenteric fat, spleen and aorta.

The protein localises to the secreted. It carries out the reaction cholesteryl (9Z-octadecenoate)(in) = cholesteryl (9Z-octadecenoate)(out). The catalysed reaction is 1,2,3-tri-(9Z-octadecenoyl)-glycerol(in) = 1,2,3-tri-(9Z-octadecenoyl)-glycerol(out). It catalyses the reaction cholesteryl (9Z,12Z)-octadecadienoate(in) = cholesteryl (9Z,12Z)-octadecadienoate(out). In terms of biological role, involved in the transfer of neutral lipids, including cholesteryl ester and triglyceride, among lipoprotein particles. Allows the net movement of cholesteryl ester from high density lipoproteins/HDL to triglyceride-rich very low density lipoproteins/VLDL, and the equimolar transport of triglyceride from VLDL to HDL. Regulates the reverse cholesterol transport, by which excess cholesterol is removed from peripheral tissues and returned to the liver for elimination. This Macaca fascicularis (Crab-eating macaque) protein is Cholesteryl ester transfer protein.